The following is a 414-amino-acid chain: Multifunctional CCA protein (414 aa).

Residues Gly8 and Arg11 each contribute to the ATP site. The CTP site is built by Gly8 and Arg11. Residues Glu21 and Asp23 each contribute to the Mg(2+) site. ATP is bound by residues Arg91, Arg137, and Arg140. CTP contacts are provided by Arg91, Arg137, and Arg140. The HD domain maps to 228–329; the sequence is TGIHTLMTLA…LKLFDAIDVW (102 aa).

The protein belongs to the tRNA nucleotidyltransferase/poly(A) polymerase family. Bacterial CCA-adding enzyme type 1 subfamily. In terms of assembly, monomer. Can also form homodimers and oligomers. Requires Mg(2+) as cofactor. It depends on Ni(2+) as a cofactor.

It catalyses the reaction a tRNA precursor + 2 CTP + ATP = a tRNA with a 3' CCA end + 3 diphosphate. The enzyme catalyses a tRNA with a 3' CCA end + 2 CTP + ATP = a tRNA with a 3' CCACCA end + 3 diphosphate. Its function is as follows. Catalyzes the addition and repair of the essential 3'-terminal CCA sequence in tRNAs without using a nucleic acid template. Adds these three nucleotides in the order of C, C, and A to the tRNA nucleotide-73, using CTP and ATP as substrates and producing inorganic pyrophosphate. tRNA 3'-terminal CCA addition is required both for tRNA processing and repair. Also involved in tRNA surveillance by mediating tandem CCA addition to generate a CCACCA at the 3' terminus of unstable tRNAs. While stable tRNAs receive only 3'-terminal CCA, unstable tRNAs are marked with CCACCA and rapidly degraded. The sequence is that of Multifunctional CCA protein from Yersinia enterocolitica serotype O:8 / biotype 1B (strain NCTC 13174 / 8081).